A 749-amino-acid polypeptide reads, in one-letter code: Photosystem I P700 chlorophyll a apoprotein A1 (749 aa).

The next 8 membrane-spanning stretches (helical) occupy residues 70 to 93 (VFSAHFGQLAVIFIWLSGMYFHGA), 156 to 179 (LYATAIGGLVMATLMLIAGWFHYH), 195 to 219 (LNHHLAGLLGLGSLSWAGHQIHVSL), 291 to 309 (TAHHHLAIAVLFIVAGHMY), 346 to 369 (WHAQLAINLATLGSLTIIVAHHMY), 385 to 411 (LSLFTHHMWIGGFCVVGAGAHAAIFLV), 433 to 455 (AIISHLNWVCIFLGFHSFGLYIH), and 531 to 549 (FLVHHIHAFTIHVTVLILL). Residues Cys573 and Cys582 each contribute to the [4Fe-4S] cluster site. Helical transmembrane passes span 589–610 (HVFLGLFWMYNAISVVIFHFSW) and 663–685 (LSAYGLVFLGAHFIWAFSLMFLF). His674 contacts chlorophyll a'. Positions 682 and 690 each coordinate chlorophyll a. Trp691 contacts phylloquinone. The helical transmembrane segment at 723–743 (AVGVAHYLLGGIATTWAFFLA) threads the bilayer.

Belongs to the PsaA/PsaB family. In terms of assembly, the PsaA/B heterodimer binds the P700 chlorophyll special pair and subsequent electron acceptors. PSI consists of a core antenna complex that captures photons, and an electron transfer chain that converts photonic excitation into a charge separation. The eukaryotic PSI reaction center is composed of at least 11 subunits. P700 is a chlorophyll a/chlorophyll a' dimer, A0 is one or more chlorophyll a, A1 is one or both phylloquinones and FX is a shared 4Fe-4S iron-sulfur center. serves as cofactor.

The protein localises to the plastid. The protein resides in the chloroplast thylakoid membrane. The catalysed reaction is reduced [plastocyanin] + hnu + oxidized [2Fe-2S]-[ferredoxin] = oxidized [plastocyanin] + reduced [2Fe-2S]-[ferredoxin]. In terms of biological role, psaA and PsaB bind P700, the primary electron donor of photosystem I (PSI), as well as the electron acceptors A0, A1 and FX. PSI is a plastocyanin-ferredoxin oxidoreductase, converting photonic excitation into a charge separation, which transfers an electron from the donor P700 chlorophyll pair to the spectroscopically characterized acceptors A0, A1, FX, FA and FB in turn. Oxidized P700 is reduced on the lumenal side of the thylakoid membrane by plastocyanin. This chain is Photosystem I P700 chlorophyll a apoprotein A1, found in Zygnema circumcarinatum (Green alga).